Here is a 307-residue protein sequence, read N- to C-terminus: Ribonuclease Z (307 aa).

Residues His-61, His-63, Asp-65, His-66, His-138, Asp-208, and His-264 each contribute to the Zn(2+) site. The active-site Proton acceptor is Asp-65.

The protein belongs to the RNase Z family. Homodimer. Zn(2+) serves as cofactor.

The enzyme catalyses Endonucleolytic cleavage of RNA, removing extra 3' nucleotides from tRNA precursor, generating 3' termini of tRNAs. A 3'-hydroxy group is left at the tRNA terminus and a 5'-phosphoryl group is left at the trailer molecule.. In terms of biological role, zinc phosphodiesterase, which displays some tRNA 3'-processing endonuclease activity. Probably involved in tRNA maturation, by removing a 3'-trailer from precursor tRNA. In Pyrococcus abyssi (strain GE5 / Orsay), this protein is Ribonuclease Z.